A 707-amino-acid chain; its full sequence is Probable potassium transporter 17 (707 aa).

The interval methionine 1–threonine 25 is disordered. Residues methionine 1–leucine 34 are Cytoplasmic-facing. The chain crosses the membrane as a helical span at residues phenylalanine 35–valine 55. At tyrosine 56–glycine 71 the chain is on the extracellular side. A glycan (N-linked (GlcNAc...) asparagine) is linked at asparagine 60. The helical transmembrane segment at isoleucine 72–alanine 92 threads the bilayer. The Cytoplasmic portion of the chain corresponds to leucine 93–arginine 157. The helical transmembrane segment at valine 158 to proline 178 threads the bilayer. At alanine 179–proline 194 the chain is on the extracellular side. Residues threonine 195–leucine 215 form a helical membrane-spanning segment. Residues glutamine 216–lysine 222 lie on the Cytoplasmic side of the membrane. Residues valine 223 to leucine 243 traverse the membrane as a helical segment. Residues tyrosine 244–leucine 276 lie on the Extracellular side of the membrane. Residues leucine 277 to phenylalanine 297 form a helical membrane-spanning segment. Topologically, residues serine 298–alanine 305 are cytoplasmic. The chain crosses the membrane as a helical span at residues phenylalanine 306–isoleucine 326. Over asparagine 327–proline 343 the chain is Extracellular. Residues valine 344–isoleucine 364 form a helical membrane-spanning segment. Residues serine 365–asparagine 402 lie on the Cytoplasmic side of the membrane. Residues tyrosine 403 to glycine 423 traverse the membrane as a helical segment. Residues asparagine 424–glycine 427 lie on the Extracellular side of the membrane. The helical transmembrane segment at valine 428 to isoleucine 448 threads the bilayer. Topologically, residues tryptophan 449–valine 454 are cytoplasmic. Residues leucine 455 to phenylalanine 475 form a helical membrane-spanning segment. Topologically, residues threonine 476–glutamate 480 are extracellular. Residues glycine 481–tyrosine 501 form a helical membrane-spanning segment. At glycine 502–valine 707 the chain is on the cytoplasmic side.

The protein belongs to the HAK/KUP transporter (TC 2.A.72.3) family.

It localises to the membrane. High-affinity potassium transporter. In Oryza sativa subsp. japonica (Rice), this protein is Probable potassium transporter 17 (HAK17).